We begin with the raw amino-acid sequence, 462 residues long: Cysteine--tRNA ligase (462 aa).

Cysteine 28 contributes to the Zn(2+) binding site. The 'HIGH' region motif lies at 30 to 40 (MTVYDYCHIGH). Cysteine 209, histidine 234, and glutamate 238 together coordinate Zn(2+). Residues 266–270 (KMSKS) carry the 'KMSKS' region motif. Lysine 269 is a binding site for ATP.

Belongs to the class-I aminoacyl-tRNA synthetase family. Monomer. The cofactor is Zn(2+).

The protein resides in the cytoplasm. It catalyses the reaction tRNA(Cys) + L-cysteine + ATP = L-cysteinyl-tRNA(Cys) + AMP + diphosphate. The protein is Cysteine--tRNA ligase of Pseudomonas fluorescens (strain SBW25).